Reading from the N-terminus, the 95-residue chain is Pyrimidine/purine nucleoside phosphorylase (95 aa).

This sequence belongs to the nucleoside phosphorylase PpnP family.

The catalysed reaction is a purine D-ribonucleoside + phosphate = a purine nucleobase + alpha-D-ribose 1-phosphate. It carries out the reaction adenosine + phosphate = alpha-D-ribose 1-phosphate + adenine. It catalyses the reaction cytidine + phosphate = cytosine + alpha-D-ribose 1-phosphate. The enzyme catalyses guanosine + phosphate = alpha-D-ribose 1-phosphate + guanine. The catalysed reaction is inosine + phosphate = alpha-D-ribose 1-phosphate + hypoxanthine. It carries out the reaction thymidine + phosphate = 2-deoxy-alpha-D-ribose 1-phosphate + thymine. It catalyses the reaction uridine + phosphate = alpha-D-ribose 1-phosphate + uracil. The enzyme catalyses xanthosine + phosphate = alpha-D-ribose 1-phosphate + xanthine. In terms of biological role, catalyzes the phosphorolysis of diverse nucleosides, yielding D-ribose 1-phosphate and the respective free bases. Can use uridine, adenosine, guanosine, cytidine, thymidine, inosine and xanthosine as substrates. Also catalyzes the reverse reactions. The chain is Pyrimidine/purine nucleoside phosphorylase from Edwardsiella ictaluri (strain 93-146).